The following is a 151-amino-acid chain: S-ribosylhomocysteine lyase (151 aa).

Positions 54, 58, and 121 each coordinate Fe cation.

Belongs to the LuxS family. As to quaternary structure, homodimer. The cofactor is Fe cation.

It catalyses the reaction S-(5-deoxy-D-ribos-5-yl)-L-homocysteine = (S)-4,5-dihydroxypentane-2,3-dione + L-homocysteine. Its function is as follows. Involved in the synthesis of autoinducer 2 (AI-2) which is secreted by bacteria and is used to communicate both the cell density and the metabolic potential of the environment. The regulation of gene expression in response to changes in cell density is called quorum sensing. Catalyzes the transformation of S-ribosylhomocysteine (RHC) to homocysteine (HC) and 4,5-dihydroxy-2,3-pentadione (DPD). The protein is S-ribosylhomocysteine lyase of Clostridium perfringens (strain ATCC 13124 / DSM 756 / JCM 1290 / NCIMB 6125 / NCTC 8237 / Type A).